We begin with the raw amino-acid sequence, 299 residues long: Acarbose 7(IV)-phosphotransferase (299 aa).

The protein belongs to the carbohydrate kinase PfkB family.

It carries out the reaction acarbose + ATP = acarbose 7(IV)-phosphate + ADP + H(+). Catalyzes the phosphorylation of the alpha-glucosidase inhibitor acarbose. Phosphorylation of acarbose could be a resistance-like self-protection mechanism. This Actinoplanes sp. (strain ATCC 31044 / CBS 674.73 / SE50/110) protein is Acarbose 7(IV)-phosphotransferase.